The following is an 82-amino-acid chain: Sodium channel neurotoxin MeuNaTxalpha-3 (82 aa).

Residues 1–8 form the signal peptide; sequence LVMAGVES. The region spanning 10-80 is the LCN-type CS-alpha/beta domain; that stretch reads RDGHIARNNN…VPIKVPGDCH (71 aa). Disulfide bonds link Cys20/Cys79, Cys24/Cys52, Cys38/Cys62, and Cys42/Cys64.

As to expression, expressed by the venom gland.

The protein localises to the secreted. In terms of biological role, alpha toxins bind voltage-independently at site-3 of sodium channels (Nav) and inhibit the inactivation of the activated channels, thereby blocking neuronal transmission. This Mesobuthus eupeus (Lesser Asian scorpion) protein is Sodium channel neurotoxin MeuNaTxalpha-3.